The primary structure comprises 124 residues: MEYEFRRNGLDGSVMARFSMEHEVMGRWFGEELGDKPAATAAVLTAIAAIQAGELREWRLTGREFSLELDEEQARVYANVLGYDNQDELDDGMSLYDAELEASCGLEDLEAALQSWQAFLVETR.

Belongs to the UPF0231 family.

The sequence is that of UPF0231 protein Sama_0645 from Shewanella amazonensis (strain ATCC BAA-1098 / SB2B).